The sequence spans 540 residues: PTS system alpha-glucoside-specific EIICB component (540 aa).

The 420-residue stretch at 1-420 (MLSQIQRFGG…LNLKTPGREE (420 aa)) folds into the PTS EIIC type-1 domain. Transmembrane regions (helical) follow at residues 12–32 (MFTP…AIML), 87–107 (ACLA…AMGM), 130–150 (IAGI…SGLV), 174–194 (FVVI…LLGW), 201–221 (IESL…VYIF), 225–245 (ILIP…GPAV), 277–297 (FALH…ALYF), 307–327 (VAGL…TEPL), 329–349 (FTFL…AATM), 352–372 (VMYI…QFLP), and 384–404 (SMMF…FVVF). The PTS EIIB type-1 domain occupies 448 to 530 (LGQAAGFLQA…ENLMKDSLST (83 aa)). Residue Cys-470 is the Phosphocysteine intermediate; for EIIB activity of the active site.

It is found in the cell membrane. The phosphoenolpyruvate-dependent sugar phosphotransferase system (sugar PTS), a major carbohydrate active -transport system, catalyzes the phosphorylation of incoming sugar substrates concomitantly with their translocation across the cell membrane. This system is involved in alpha-glucoside transport. Functionally, involved in the transport and simultaneous phosphorylation at O-6 of the glucosyl moiety of sucrose and its five linkage-isomeric alpha-D-glucosyl-D-fructoses. Can also transport maltose, isomaltose and maltitol, phosphorylating at O-6 of their non-reducing glucose portion. The sequence is that of PTS system alpha-glucoside-specific EIICB component (aglA) from Klebsiella pneumoniae.